Here is a 271-residue protein sequence, read N- to C-terminus: 4-hydroxy-tetrahydrodipicolinate reductase (271 aa).

NAD(+)-binding positions include 11–16 (GGSGRM) and Glu37. Position 38 (Arg38) interacts with NADP(+). NAD(+) is bound by residues 101-103 (GTT) and 125-128 (APNM). The active-site Proton donor/acceptor is the His158. Residue His159 participates in (S)-2,3,4,5-tetrahydrodipicolinate binding. Lys162 acts as the Proton donor in catalysis. 168-169 (GT) contacts (S)-2,3,4,5-tetrahydrodipicolinate.

This sequence belongs to the DapB family.

It is found in the cytoplasm. The catalysed reaction is (S)-2,3,4,5-tetrahydrodipicolinate + NAD(+) + H2O = (2S,4S)-4-hydroxy-2,3,4,5-tetrahydrodipicolinate + NADH + H(+). It catalyses the reaction (S)-2,3,4,5-tetrahydrodipicolinate + NADP(+) + H2O = (2S,4S)-4-hydroxy-2,3,4,5-tetrahydrodipicolinate + NADPH + H(+). It functions in the pathway amino-acid biosynthesis; L-lysine biosynthesis via DAP pathway; (S)-tetrahydrodipicolinate from L-aspartate: step 4/4. In terms of biological role, catalyzes the conversion of 4-hydroxy-tetrahydrodipicolinate (HTPA) to tetrahydrodipicolinate. The polypeptide is 4-hydroxy-tetrahydrodipicolinate reductase (Shewanella halifaxensis (strain HAW-EB4)).